We begin with the raw amino-acid sequence, 520 residues long: Peptidoglycan-recognition protein LC (520 aa).

2 stretches are compositionally biased toward polar residues: residues 1–14 (MPFS…QCSN) and 27–36 (KNCSTSSTDS). 2 disordered regions span residues 1–78 (MPFS…RISV) and 239–278 (DKWK…AQTP). Residues 1 to 291 (MPFSNETEMS…PFLPNTVGRK (291 aa)) are Cytoplasmic-facing. Composition is skewed to basic and acidic residues over residues 48-58 (RPEKETKDRGT) and 66-78 (KSEE…RISV). A helical; Signal-anchor for type II membrane protein transmembrane segment spans residues 292–312 (AVTVTVVFVTLTFLLGIVLAT). Residues 313–520 (TTNLFGKTLN…ASFANWTHWS (208 aa)) lie on the Extracellular side of the membrane. Asn389 carries an N-linked (GlcNAc...) asparagine glycan. Cys390 and Cys396 are oxidised to a cystine. The N-acetylmuramoyl-L-alanine amidase domain occupies 412–490 (QKCDIAYNFL…KLGKIAPSYR (79 aa)). N-linked (GlcNAc...) asparagine glycosylation occurs at Asn515.

It belongs to the N-acetylmuramoyl-L-alanine amidase 2 family. Post-translationally, proteolytically cleaved, probably by a metaloprotease such as Mmp2; proteolytic cleavage leads to activation of the imd/Relish signaling pathway. Expressed in the fat body and hemocytes.

It localises to the membrane. Its activity is regulated as follows. Activated by proteolytic cleavage in response to Gram-negative bacterial infection; cleavage may be mediated by endogenous proteases, such as the metalloprotease Mmp2 or elastase, or by bacterially expressed proteases such as the surface serine protease OmpT. Major activator of the imd/Relish pathway and is likely to encode a pattern recognition molecule for the humoral immune response. Required for Relish processing and nuclear translocation following proteolytic cleavage. Involved in the response to lipopolysaccharide (LPS) and peptidoglycan of Gram-negative bacteria. The different isoforms probably display different recognition capabilities to various microbial patterns. In terms of biological role, mediates the response to LPS and Gram-negative bacteria. Its function is as follows. Mediates the response to LPS, peptidoglycan and Gram-negative bacteria. The sequence is that of Peptidoglycan-recognition protein LC (PGRP-LC) from Drosophila melanogaster (Fruit fly).